The sequence spans 1861 residues: Amylopullulanase (1861 aa).

The first 35 residues, 1 to 35 (MNKKLFTNRFISFNMSLLLVLTAVFSSIPLHSVHA), serve as a signal peptide directing secretion. Ca(2+) contacts are provided by aspartate 248, asparagine 250, aspartate 288, aspartate 343, asparagine 401, aspartate 403, asparagine 406, aspartate 407, and aspartate 453. Residues histidine 526 and arginine 626 each contribute to the substrate site. The active-site Nucleophile is aspartate 628. The Proton donor role is filled by glutamate 657. Substrate-binding positions include 733–734 (HD), aspartate 793, and arginine 797. Fibronectin type-III domains follow at residues 929–1021 (APQA…AYPI) and 1158–1252 (KPTA…VVPI). The region spanning 1246–1354 (KPDVVPIKVI…INDTVYRWRD (109 aa)) is the CBM20 domain. The tract at residues 1448 to 1486 (QENNSGSGTGNNNTSTSGSNSSSTGSGSTGSTSITSNIS) is disordered. A compositionally biased stretch (low complexity) spans 1450-1486 (NNSGSGTGNNNTSTSGSNSSSTGSGSTGSTSITSNIS). 3 SLH domains span residues 1677 to 1740 (EYDK…YSGE), 1741 to 1799 (FSDV…KEEN), and 1802 to 1861 (ATTF…SGNI).

The protein belongs to the glycosyl hydrolase 13 family. Ca(2+) serves as cofactor. Post-translationally, glycosylated.

It localises to the secreted. The protein localises to the cell wall. The enzyme catalyses Endohydrolysis of (1-&gt;4)-alpha-D-glucosidic linkages in polysaccharides containing three or more (1-&gt;4)-alpha-linked D-glucose units.. The catalysed reaction is Hydrolysis of (1-&gt;6)-alpha-D-glucosidic linkages in pullulan, amylopectin and glycogen, and in the alpha- and beta-limit dextrins of amylopectin and glycogen.. In Thermoanaerobacterium thermosulfurigenes (Clostridium thermosulfurogenes), this protein is Amylopullulanase (amyB).